Here is a 421-residue protein sequence, read N- to C-terminus: Pyridinium-3,5-bisthiocarboxylic acid mononucleotide nickel insertion protein (421 aa).

This sequence belongs to the LarC family.

It catalyses the reaction Ni(II)-pyridinium-3,5-bisthiocarboxylate mononucleotide = pyridinium-3,5-bisthiocarboxylate mononucleotide + Ni(2+). Its function is as follows. Involved in the biosynthesis of a nickel-pincer cofactor ((SCS)Ni(II) pincer complex). Binds Ni(2+), and functions in nickel delivery to pyridinium-3,5-bisthiocarboxylic acid mononucleotide (P2TMN), to form the mature cofactor. Is thus probably required for the activation of nickel-pincer cofactor-dependent enzymes. This Alkaliphilus metalliredigens (strain QYMF) protein is Pyridinium-3,5-bisthiocarboxylic acid mononucleotide nickel insertion protein.